The following is a 231-amino-acid chain: Proteasome subunit alpha type-2 (231 aa).

This sequence belongs to the peptidase T1A family. As to quaternary structure, the 26S proteasome consists of a 20S proteasome core and two 19S regulatory subunits. The 20S proteasome core is composed of 28 subunits that are arranged in four stacked rings, resulting in a barrel-shaped structure. The two end rings are each formed by seven alpha subunits, and the two central rings are each formed by seven beta subunits. The catalytic chamber with the active sites is on the inside of the barrel.

Its subcellular location is the cytoplasm. It is found in the nucleus. In terms of biological role, the proteasome is a multicatalytic proteinase complex which is characterized by its ability to cleave peptides with Arg, Phe, Tyr, Leu, and Glu adjacent to the leaving group at neutral or slightly basic pH. The proteasome has an ATP-dependent proteolytic activity. The chain is Proteasome subunit alpha type-2 from Trypanosoma brucei brucei.